Consider the following 182-residue polypeptide: Bis(5'-nucleosyl)-tetraphosphatase [asymmetrical] (182 aa).

The HIT domain maps to 3–110 (KQLYFSKFPV…IPRKKADFSE (108 aa)). Substrate-binding positions include Asn28, Gln84, and 90-93 (GQTV). The Histidine triad motif signature appears at 95 to 99 (HVHVH). The Tele-AMP-histidine intermediate role is filled by His97. His99 is a substrate binding site. The interval 135 to 161 (RYAGDERPPTSMRQAIPKDEDRKPRTL) is disordered. A compositionally biased stretch (basic and acidic residues) spans 150-161 (IPKDEDRKPRTL).

It catalyses the reaction P(1),P(4)-bis(5'-guanosyl) tetraphosphate + H2O = GMP + GTP + 2 H(+). Its function is as follows. Asymmetrically hydrolyzes Ap4A to yield AMP and ATP. The protein is Bis(5'-nucleosyl)-tetraphosphatase [asymmetrical] (aph1) of Schizosaccharomyces pombe (strain 972 / ATCC 24843) (Fission yeast).